A 205-amino-acid polypeptide reads, in one-letter code: Methylamine utilization protein MauD (205 aa).

Residues 5–25 (FLIASNVLLWLALIGCAVLML) traverse the membrane as a helical segment. A Thioredoxin domain is found at 50–184 (PDVGDAAPTF…LESLLEADKS (135 aa)).

It is found in the membrane. The protein operates within one-carbon metabolism; methylamine degradation. Functionally, may be specifically involved in the processing, transport, and/or maturation of the MADH beta-subunit. The polypeptide is Methylamine utilization protein MauD (mauD) (Methylorubrum extorquens (strain ATCC 14718 / DSM 1338 / JCM 2805 / NCIMB 9133 / AM1) (Methylobacterium extorquens)).